The primary structure comprises 270 residues: NAD kinase (270 aa).

The active-site Proton acceptor is the D61. Residues 61 to 62 (DG), 133 to 134 (NE), R144, R163, D165, and 176 to 181 (TAYNLS) each bind NAD(+).

This sequence belongs to the NAD kinase family. Requires a divalent metal cation as cofactor.

The protein localises to the cytoplasm. The catalysed reaction is NAD(+) + ATP = ADP + NADP(+) + H(+). In terms of biological role, involved in the regulation of the intracellular balance of NAD and NADP, and is a key enzyme in the biosynthesis of NADP. Catalyzes specifically the phosphorylation on 2'-hydroxyl of the adenosine moiety of NAD to yield NADP. This chain is NAD kinase, found in Natronomonas pharaonis (strain ATCC 35678 / DSM 2160 / CIP 103997 / JCM 8858 / NBRC 14720 / NCIMB 2260 / Gabara) (Halobacterium pharaonis).